The primary structure comprises 124 residues: Small ribosomal subunit protein uS12 (124 aa).

The residue at position 89 (aspartate 89) is a 3-methylthioaspartic acid.

It belongs to the universal ribosomal protein uS12 family. As to quaternary structure, part of the 30S ribosomal subunit. Contacts proteins S8 and S17. May interact with IF1 in the 30S initiation complex.

Its function is as follows. With S4 and S5 plays an important role in translational accuracy. Interacts with and stabilizes bases of the 16S rRNA that are involved in tRNA selection in the A site and with the mRNA backbone. Located at the interface of the 30S and 50S subunits, it traverses the body of the 30S subunit contacting proteins on the other side and probably holding the rRNA structure together. The combined cluster of proteins S8, S12 and S17 appears to hold together the shoulder and platform of the 30S subunit. In Aliivibrio fischeri (strain ATCC 700601 / ES114) (Vibrio fischeri), this protein is Small ribosomal subunit protein uS12.